A 119-amino-acid chain; its full sequence is Beta-2-microglobulin (119 aa).

The N-terminal stretch at 1–20 (MARFVVAALLVLLSLSGLEA) is a signal peptide. Residues 25–114 (PKIQVYSRHP…MTFPAPKTVK (90 aa)) enclose the Ig-like C1-type domain. Cysteines 45 and 100 form a disulfide.

This sequence belongs to the beta-2-microglobulin family. Heterodimer of an alpha chain and a beta chain. Beta-2-microglobulin is the beta-chain of major histocompatibility complex class I molecules.

It localises to the secreted. In terms of biological role, component of the class I major histocompatibility complex (MHC). Involved in the presentation of peptide antigens to the immune system. The sequence is that of Beta-2-microglobulin (B2M) from Pithecia irrorata (Gray monk saki).